Here is a 133-residue protein sequence, read N- to C-terminus: Nickel-responsive regulator (133 aa).

Ni(2+) is bound by residues H76, H87, H89, and C95.

This sequence belongs to the transcriptional regulatory CopG/NikR family. Homotetramer. Ni(2+) serves as cofactor.

Its function is as follows. Transcriptional repressor of the nikABCDE operon. Is active in the presence of excessive concentrations of intracellular nickel. The sequence is that of Nickel-responsive regulator from Escherichia fergusonii (strain ATCC 35469 / DSM 13698 / CCUG 18766 / IAM 14443 / JCM 21226 / LMG 7866 / NBRC 102419 / NCTC 12128 / CDC 0568-73).